The sequence spans 1113 residues: Period circadian protein homolog 3 (1113 aa).

Residues 1–48 are disordered; the sequence is MDPCGDPAVPGGDCPQTRGPGLQGASGQEGPLQGTCVDSSHSEHEDRN. Residues 54–63 carry the Nuclear export signal 1 motif; that stretch reads LIMVVQEMKK. PAS domains lie at 120–187 and 258–324; these read LASE…PTQL and YEAP…KVLK. A PAC domain is found at 333–376; it reads HSPVRFCTQNGEYVILDSSWSSFVNPWSRKVSFIIGRHKVRTSP. A Nuclear export signal 3 motif is present at residues 399–408; the sequence is LQEQIHKLLL. The segment covering 418–427 has biased composition (low complexity); it reads GYGSLGSSGS. Disordered regions lie at residues 418–451, 485–530, 561–580, 718–742, and 871–906; these read GYGS…GQHE, VAET…SSSY, TSSS…SQRD, HSRC…DTSS, and LVPA…PFIS. Polar residues-rich tracts occupy residues 428-441 and 501-530; these read QEQH…SESS and FSSS…SSSY. The interval 551–750 is CSNK1E binding domain; sequence LKRKCISCTN…SSPGAHLCPH (200 aa). Basic and acidic residues predominate over residues 566 to 580; sequence EEAKPIPEVDSSQRD. A Nuclear localization signal motif is present at residues 719-735; sequence SRCAGSERQKHKRKKLP. Positions 889-901 are enriched in basic and acidic residues; it reads RRVEENWEAHSEE. Position 907 is a phosphoserine (S907). The short motif at 913–920 is the Nuclear export signal 2 element; that stretch reads LQLNLLQE. The disordered stretch occupies residues 921–1010; that stretch reads EMPAPSESAD…DRQRDEALPG (90 aa). The segment covering 962-986 has biased composition (low complexity); that stretch reads ATATAQQESAAASGSSASSIYFSST. Basic and acidic residues predominate over residues 993–1007; that stretch reads SENRQRPQDRQRDEA. The interval 1035–1113 is CRY binding domain; that stretch reads ERGREEVLKQ…LEQHPAEDTS (79 aa).

As to quaternary structure, homodimer. Component of the circadian core oscillator, which includes the CRY proteins, CLOCK or NPAS2, BMAL1 or BMAL2, CSNK1D and/or CSNK1E, TIMELESS and the PER proteins. Interacts directly with PER1, PER2, CRY1, CRY2, and TIMELESS; interaction with CRY1 and CRY2 is weak and not rhythmic. Interacts with FBXW11 and BTRC. In terms of processing, phosphorylation by CSNK1E is weak and appears to require association with PER1 and translocation to the nucleus. Ubiquitinated. As to expression, widely expressed. Expressed in heart, brain, lung, liver, skeletal muscle, testis, and at low level in the spleen and kidney. In brain, mainly found in the SCN, hippocampus, piriform cortex, and cerebellum. Lower level of expression in the neocortex. Expression exhibits synchronous oscillations in liver, skeletal muscle and testis.

Its subcellular location is the cytoplasm. The protein localises to the nucleus. Its function is as follows. Originally described as a core component of the circadian clock. The circadian clock, an internal time-keeping system, regulates various physiological processes through the generation of approximately 24 hour circadian rhythms in gene expression, which are translated into rhythms in metabolism and behavior. It is derived from the Latin roots 'circa' (about) and 'diem' (day) and acts as an important regulator of a wide array of physiological functions including metabolism, sleep, body temperature, blood pressure, endocrine, immune, cardiovascular, and renal function. Consists of two major components: the central clock, residing in the suprachiasmatic nucleus (SCN) of the brain, and the peripheral clocks that are present in nearly every tissue and organ system. Both the central and peripheral clocks can be reset by environmental cues, also known as Zeitgebers (German for 'timegivers'). The predominant Zeitgeber for the central clock is light, which is sensed by retina and signals directly to the SCN. The central clock entrains the peripheral clocks through neuronal and hormonal signals, body temperature and feeding-related cues, aligning all clocks with the external light/dark cycle. Circadian rhythms allow an organism to achieve temporal homeostasis with its environment at the molecular level by regulating gene expression to create a peak of protein expression once every 24 hours to control when a particular physiological process is most active with respect to the solar day. Transcription and translation of core clock components (CLOCK, NPAS2, BMAL1, BMAL2, PER1, PER2, PER3, CRY1 and CRY2) plays a critical role in rhythm generation, whereas delays imposed by post-translational modifications (PTMs) are important for determining the period (tau) of the rhythms (tau refers to the period of a rhythm and is the length, in time, of one complete cycle). A diurnal rhythm is synchronized with the day/night cycle, while the ultradian and infradian rhythms have a period shorter and longer than 24 hours, respectively. Disruptions in the circadian rhythms contribute to the pathology of cardiovascular diseases, cancer, metabolic syndromes and aging. A transcription/translation feedback loop (TTFL) forms the core of the molecular circadian clock mechanism. Transcription factors, CLOCK or NPAS2 and BMAL1 or BMAL2, form the positive limb of the feedback loop, act in the form of a heterodimer and activate the transcription of core clock genes and clock-controlled genes (involved in key metabolic processes), harboring E-box elements (5'-CACGTG-3') within their promoters. The core clock genes: PER1/2/3 and CRY1/2 which are transcriptional repressors form the negative limb of the feedback loop and interact with the CLOCK|NPAS2-BMAL1|BMAL2 heterodimer inhibiting its activity and thereby negatively regulating their own expression. This heterodimer also activates nuclear receptors NR1D1, NR1D2, RORA, RORB and RORG, which form a second feedback loop and which activate and repress BMAL1 transcription, respectively. Has a redundant role with the other PER proteins PER1 and PER2 and is not essential for the circadian rhythms maintenance. In contrast, plays an important role in sleep-wake timing and sleep homeostasis probably through the transcriptional regulation of sleep homeostasis-related genes, without influencing circadian parameters. Can bind heme. The polypeptide is Period circadian protein homolog 3 (Per3) (Mus musculus (Mouse)).